The following is a 145-amino-acid chain: Antiholin-like protein LrgA (145 aa).

The next 4 membrane-spanning stretches (helical) occupy residues Phe13–Ile30, Gly40–Val62, Leu69–Ile91, and Pro95–Thr117.

This sequence belongs to the CidA/LrgA family. LrgA subfamily.

It localises to the cell membrane. Functionally, inhibits the expression or activity of extracellular murein hydrolases by interacting, possibly with LrgB, with the holin-like proteins CidA and/or CidB. The LrgAB and CidAB proteins may affect the proton motive force of the membrane. May be involved in programmed cell death (PCD), possibly triggering PCD in response to antibiotics and environmental stresses. The protein is Antiholin-like protein LrgA of Staphylococcus aureus (strain MW2).